Reading from the N-terminus, the 264-residue chain is Thymidylate synthase (264 aa).

Arg-21 is a binding site for dUMP. A (6R)-5,10-methylene-5,6,7,8-tetrahydrofolate-binding site is contributed by His-51. DUMP is bound at residue 126-127 (RR). The active-site Nucleophile is the Cys-146. DUMP-binding positions include 166 to 169 (RSCD), Asn-177, and 207 to 209 (HLY). Residue Asp-169 participates in (6R)-5,10-methylene-5,6,7,8-tetrahydrofolate binding. Residue Ala-263 participates in (6R)-5,10-methylene-5,6,7,8-tetrahydrofolate binding.

Belongs to the thymidylate synthase family. Bacterial-type ThyA subfamily. As to quaternary structure, homodimer.

The protein resides in the cytoplasm. It catalyses the reaction dUMP + (6R)-5,10-methylene-5,6,7,8-tetrahydrofolate = 7,8-dihydrofolate + dTMP. It functions in the pathway pyrimidine metabolism; dTTP biosynthesis. Its function is as follows. Catalyzes the reductive methylation of 2'-deoxyuridine-5'-monophosphate (dUMP) to 2'-deoxythymidine-5'-monophosphate (dTMP) while utilizing 5,10-methylenetetrahydrofolate (mTHF) as the methyl donor and reductant in the reaction, yielding dihydrofolate (DHF) as a by-product. This enzymatic reaction provides an intracellular de novo source of dTMP, an essential precursor for DNA biosynthesis. In Hamiltonella defensa subsp. Acyrthosiphon pisum (strain 5AT), this protein is Thymidylate synthase.